A 204-amino-acid polypeptide reads, in one-letter code: Elongation factor Ts (204 aa).

The tract at residues 87–90 (TDFV) is involved in Mg(2+) ion dislocation from EF-Tu.

The protein belongs to the EF-Ts family.

Its subcellular location is the cytoplasm. Functionally, associates with the EF-Tu.GDP complex and induces the exchange of GDP to GTP. It remains bound to the aminoacyl-tRNA.EF-Tu.GTP complex up to the GTP hydrolysis stage on the ribosome. This Frankia alni (strain DSM 45986 / CECT 9034 / ACN14a) protein is Elongation factor Ts.